A 100-amino-acid polypeptide reads, in one-letter code: Coiled-coil domain-containing protein 167 (100 aa).

A coiled-coil region spans residues 14–81 (VASEIDRVEE…VLRGENRRNM (68 aa)). A helical membrane pass occupies residues 82-99 (MLSVALLAISALFYYTFI).

The protein resides in the membrane. The chain is Coiled-coil domain-containing protein 167 (ccdc167) from Danio rerio (Zebrafish).